The chain runs to 251 residues: Triosephosphate isomerase (251 aa).

Substrate is bound by residues N12 and K14. The Electrophile role is filled by H96. E168 serves as the catalytic Proton acceptor.

Belongs to the triosephosphate isomerase family. In terms of assembly, homodimer.

It is found in the cytoplasm. Its subcellular location is the glycosome. The catalysed reaction is D-glyceraldehyde 3-phosphate = dihydroxyacetone phosphate. It participates in carbohydrate biosynthesis; gluconeogenesis. Its pathway is carbohydrate degradation; glycolysis; D-glyceraldehyde 3-phosphate from glycerone phosphate: step 1/1. In Leishmania mexicana, this protein is Triosephosphate isomerase.